The primary structure comprises 705 residues: Polyribonucleotide nucleotidyltransferase (705 aa).

Mg(2+) contacts are provided by Asp-486 and Asp-492. In terms of domain architecture, KH spans 553–612 (PRIHTMKVSQDKIRDIIGKGGATIRQLTEETGTTIEIEDDGTVKIAATSGEQAEDAINRI). The S1 motif domain occupies 622 to 690 (GTLYTGKVVR…RQGRVRLSIK (69 aa)).

Belongs to the polyribonucleotide nucleotidyltransferase family. Component of the RNA degradosome, which is a multiprotein complex involved in RNA processing and mRNA degradation. Mg(2+) serves as cofactor.

The protein localises to the cytoplasm. The catalysed reaction is RNA(n+1) + phosphate = RNA(n) + a ribonucleoside 5'-diphosphate. Its function is as follows. Involved in mRNA degradation. Catalyzes the phosphorolysis of single-stranded polyribonucleotides processively in the 3'- to 5'-direction. The sequence is that of Polyribonucleotide nucleotidyltransferase from Colwellia psychrerythraea (strain 34H / ATCC BAA-681) (Vibrio psychroerythus).